The following is a 267-amino-acid chain: MSQMLSPDMTIAAEAVTKAKIEVKNLNFYYGQSKALKDITLSLPERSVTAFIGPSGCGKSTLLRVFNRIYELYPKQTAEGQVLLDGQNVLDRSQDLNLLRTKIGMVFQKPTPFPMSIYENIAFGVRLYEKISKAEMDGRVEQALKRAALWTEVKDKLNASGLSLSGGQQQRLCIARTVAVKPEVILLDEPASALDPLSTAKIEELIDELQADYTIVIVTHNMQQAARVSKQTAFMYLGELVEFDRTEKIFTSPREKRTQDYITGRFG.

In terms of domain architecture, ABC transporter spans 21-262 (IEVKNLNFYY…PREKRTQDYI (242 aa)). Residue 53-60 (GPSGCGKS) participates in ATP binding.

Belongs to the ABC transporter superfamily. Phosphate importer (TC 3.A.1.7) family. As to quaternary structure, the complex is composed of two ATP-binding proteins (PstB), two transmembrane proteins (PstC and PstA) and a solute-binding protein (PstS).

The protein localises to the cell inner membrane. It catalyses the reaction phosphate(out) + ATP + H2O = ADP + 2 phosphate(in) + H(+). Functionally, part of the ABC transporter complex PstSACB involved in phosphate import. Responsible for energy coupling to the transport system. This is Phosphate import ATP-binding protein PstB from Mesorhizobium japonicum (strain LMG 29417 / CECT 9101 / MAFF 303099) (Mesorhizobium loti (strain MAFF 303099)).